A 301-amino-acid chain; its full sequence is 2-methylisocitrate lyase (301 aa).

Position 53-55 (53-55) interacts with substrate; sequence SGA. Positions 92 and 94 each coordinate Mg(2+). Substrate contacts are provided by residues 129–130, arginine 162, glutamate 192, 214–216, arginine 245, and arginine 274; these read CG and NMT.

It belongs to the isocitrate lyase/PEP mutase superfamily. Methylisocitrate lyase family. Requires Mg(2+) as cofactor.

It carries out the reaction 3-hydroxybutane-1,2,3-tricarboxylate = pyruvate + succinate. Its function is as follows. Involved in the methylcitric acid cycle. Catalyzes the cleavage of 2-methylisocitrate to yield pyruvate and succinate. The protein is 2-methylisocitrate lyase of Bacillus subtilis (strain 168).